The sequence spans 316 residues: Ribosomal protein L11 methyltransferase (316 aa).

4 residues coordinate S-adenosyl-L-methionine: threonine 162, glycine 183, aspartate 205, and asparagine 248.

This sequence belongs to the methyltransferase superfamily. PrmA family.

The protein resides in the cytoplasm. It catalyses the reaction L-lysyl-[protein] + 3 S-adenosyl-L-methionine = N(6),N(6),N(6)-trimethyl-L-lysyl-[protein] + 3 S-adenosyl-L-homocysteine + 3 H(+). Functionally, methylates ribosomal protein L11. The chain is Ribosomal protein L11 methyltransferase from Levilactobacillus brevis (strain ATCC 367 / BCRC 12310 / CIP 105137 / JCM 1170 / LMG 11437 / NCIMB 947 / NCTC 947) (Lactobacillus brevis).